The chain runs to 217 residues: CXXC-type zinc finger protein 4 (217 aa).

The disordered stretch occupies residues 1–20 (MHRNDSQRLGKPGGAPESLQ). A CXXC-type zinc finger spans residues 122 to 163 (AKKKRKRCGVCVPCKRLINCGVCSSCRNRKTGHQICKFRKCE). Zn(2+) contacts are provided by Cys-129, Cys-132, Cys-135, Cys-141, Cys-144, Cys-147, Cys-157, and Cys-162.

Its subcellular location is the cytoplasm. Functionally, acts as a negative regulator of the Wnt signaling pathway required for anterior neural structure formation. Ectopic expression induces ventralization. Binds preferentially to DNA containing cytidine-phosphate-guanosine (CpG) dinucleotides over CpH (H=A, T, and C), hemimethylated-CpG and hemimethylated-hydroxymethyl-CpG. The polypeptide is CXXC-type zinc finger protein 4 (cxxc4) (Xenopus laevis (African clawed frog)).